The sequence spans 100 residues: Aspartyl/glutamyl-tRNA(Asn/Gln) amidotransferase subunit C (100 aa).

It belongs to the GatC family. In terms of assembly, heterotrimer of A, B and C subunits.

The enzyme catalyses L-glutamyl-tRNA(Gln) + L-glutamine + ATP + H2O = L-glutaminyl-tRNA(Gln) + L-glutamate + ADP + phosphate + H(+). The catalysed reaction is L-aspartyl-tRNA(Asn) + L-glutamine + ATP + H2O = L-asparaginyl-tRNA(Asn) + L-glutamate + ADP + phosphate + 2 H(+). Its function is as follows. Allows the formation of correctly charged Asn-tRNA(Asn) or Gln-tRNA(Gln) through the transamidation of misacylated Asp-tRNA(Asn) or Glu-tRNA(Gln) in organisms which lack either or both of asparaginyl-tRNA or glutaminyl-tRNA synthetases. The reaction takes place in the presence of glutamine and ATP through an activated phospho-Asp-tRNA(Asn) or phospho-Glu-tRNA(Gln). The sequence is that of Aspartyl/glutamyl-tRNA(Asn/Gln) amidotransferase subunit C from Rickettsia typhi (strain ATCC VR-144 / Wilmington).